The sequence spans 401 residues: Adenylosuccinate synthetase (401 aa).

GTP contacts are provided by residues 11–17 and 39–41; these read GDEGKGK and GHT. Catalysis depends on Asp12, which acts as the Proton acceptor. Positions 12 and 39 each coordinate Mg(2+). IMP-binding positions include 12–15, 37–40, Thr127, Arg141, Gln212, Thr227, and Arg290; these read DEGK and NAGH. Residue His40 is the Proton donor of the active site. 286–292 is a substrate binding site; it reads ATTGRPR. Residues Arg292, 318–320, and 390–392 each bind GTP; these read KGD and SVG.

The protein belongs to the adenylosuccinate synthetase family. Homodimer. Mg(2+) is required as a cofactor.

It localises to the cytoplasm. The catalysed reaction is IMP + L-aspartate + GTP = N(6)-(1,2-dicarboxyethyl)-AMP + GDP + phosphate + 2 H(+). It functions in the pathway purine metabolism; AMP biosynthesis via de novo pathway; AMP from IMP: step 1/2. Plays an important role in the de novo pathway of purine nucleotide biosynthesis. Catalyzes the first committed step in the biosynthesis of AMP from IMP. The protein is Adenylosuccinate synthetase of Thermosipho africanus (strain TCF52B).